We begin with the raw amino-acid sequence, 286 residues long: Putative thiosulfate sulfurtransferase (286 aa).

Residues 27–134 (DDPAYRLVEV…WVDNDYPTTD (108 aa)) enclose the Rhodanese 1 domain. Glycyl lysine isopeptide (Lys-Gly) (interchain with G-Cter in SAMP2) cross-links involve residues Lys162 and Lys166. Positions 164 to 283 (VDKGLPLVDV…WGNLVGAPVE (120 aa)) constitute a Rhodanese 2 domain. Residue Cys242 is the Cysteine persulfide intermediate of the active site. Substrate is bound at residue Arg247.

It carries out the reaction thiosulfate + hydrogen cyanide = thiocyanate + sulfite + 2 H(+). Functionally, may be a sulfotransferase involved in the formation of thiosulfate. This is Putative thiosulfate sulfurtransferase (tssA) from Haloferax volcanii (strain ATCC 29605 / DSM 3757 / JCM 8879 / NBRC 14742 / NCIMB 2012 / VKM B-1768 / DS2) (Halobacterium volcanii).